We begin with the raw amino-acid sequence, 33 residues long: Photosystem II reaction center protein Psb30 (33 aa).

Residues 5–25 (ILSQLIAIAVTLFLGPVVVIL) form a helical membrane-spanning segment.

The protein belongs to the Psb30/Ycf12 family. PSII is composed of 1 copy each of membrane proteins PsbA, PsbB, PsbC, PsbD, PsbE, PsbF, PsbH, PsbI, PsbJ, PsbK, PsbL, PsbM, PsbT, PsbX, PsbY, PsbZ, Psb30/Ycf12, peripheral proteins of the oxygen-evolving complex and a large number of cofactors. It forms dimeric complexes.

It is found in the plastid. The protein resides in the chloroplast thylakoid membrane. A core subunit of photosystem II (PSII), probably helps stabilize the reaction center. The sequence is that of Photosystem II reaction center protein Psb30 from Oedogonium cardiacum (Filamentous green alga).